The sequence spans 359 residues: Alanine racemase, biosynthetic (359 aa).

The Proton acceptor; specific for D-alanine role is filled by Lys-34. Lys-34 is modified (N6-(pyridoxal phosphate)lysine). Arg-129 is a substrate binding site. The active-site Proton acceptor; specific for L-alanine is Tyr-255. Met-303 serves as a coordination point for substrate.

Belongs to the alanine racemase family. Monomer but homodimer in the presence of the substrate. Requires pyridoxal 5'-phosphate as cofactor.

The enzyme catalyses L-alanine = D-alanine. The protein operates within amino-acid biosynthesis; D-alanine biosynthesis; D-alanine from L-alanine: step 1/1. Its pathway is cell wall biogenesis; peptidoglycan biosynthesis. Catalyzes the interconversion of L-alanine and D-alanine. In Shigella sonnei, this protein is Alanine racemase, biosynthetic (alr).